Consider the following 138-residue polypeptide: Biopolymer transport protein exbD1 (138 aa).

At 1–16 the chain is on the cytoplasmic side; the sequence is MIKSSAKHNDFGLTPD. Residues 17 to 37 form a helical membrane-spanning segment; it reads LTPLLDIIFIVMVFLLLTASV. Over 38–138 the chain is Periplasmic; the sequence is RLESLEVALP…TQLLTEPSHS (101 aa).

The protein belongs to the ExbD/TolR family. The accessory proteins ExbB and ExbD seem to form a complex with TonB.

It localises to the cell inner membrane. Functionally, involved in the TonB-dependent energy-dependent transport of various receptor-bound substrates. The chain is Biopolymer transport protein exbD1 (exbD1) from Vibrio cholerae serotype O1 (strain ATCC 39315 / El Tor Inaba N16961).